We begin with the raw amino-acid sequence, 163 residues long: uncharacterized protein (163 aa).

Residues 101–162 (LESMKVERKP…KMGERILERE (62 aa)) are a coiled coil.

This is an uncharacterized protein from Aquifex aeolicus (strain VF5).